Reading from the N-terminus, the 226-residue chain is UPF0758 protein SAK_1186 (226 aa).

The 123-residue stretch at 103 to 225 (QILSSEQLAR…YYSFREEADI (123 aa)) folds into the MPN domain. The Zn(2+) site is built by His174, His176, and Asp187. Residues 174 to 187 (HNHPSGSPKPSESD) carry the JAMM motif motif.

Belongs to the UPF0758 family.

This Streptococcus agalactiae serotype Ia (strain ATCC 27591 / A909 / CDC SS700) protein is UPF0758 protein SAK_1186.